The following is a 447-amino-acid chain: Cysteine--tRNA ligase (447 aa).

Cys28 is a binding site for Zn(2+). The 'HIGH' region motif lies at 30–40; that stretch reads PTVYNYIHIGN. 3 residues coordinate Zn(2+): Cys211, His236, and Glu240. The 'KMSKS' region signature appears at 268-272; the sequence is KMSKS. Residue Lys271 coordinates ATP.

Belongs to the class-I aminoacyl-tRNA synthetase family. As to quaternary structure, monomer. It depends on Zn(2+) as a cofactor.

Its subcellular location is the cytoplasm. The enzyme catalyses tRNA(Cys) + L-cysteine + ATP = L-cysteinyl-tRNA(Cys) + AMP + diphosphate. This chain is Cysteine--tRNA ligase, found in Streptococcus pyogenes serotype M6 (strain ATCC BAA-946 / MGAS10394).